The following is a 116-amino-acid chain: Large ribosomal subunit protein uL18 (116 aa).

Belongs to the universal ribosomal protein uL18 family. In terms of assembly, part of the 50S ribosomal subunit; part of the 5S rRNA/L5/L18/L25 subcomplex. Contacts the 5S and 23S rRNAs.

In terms of biological role, this is one of the proteins that bind and probably mediate the attachment of the 5S RNA into the large ribosomal subunit, where it forms part of the central protuberance. The protein is Large ribosomal subunit protein uL18 of Mycoplasma pneumoniae (strain ATCC 29342 / M129 / Subtype 1) (Mycoplasmoides pneumoniae).